The sequence spans 121 residues: Large ribosomal subunit protein uL22c (121 aa).

The protein belongs to the universal ribosomal protein uL22 family. In terms of assembly, part of the 50S ribosomal subunit.

It localises to the plastid. Its subcellular location is the chloroplast. In terms of biological role, this protein binds specifically to 23S rRNA. Functionally, the globular domain of the protein is located near the polypeptide exit tunnel on the outside of the subunit, while an extended beta-hairpin is found that lines the wall of the exit tunnel in the center of the 70S ribosome. The protein is Large ribosomal subunit protein uL22c (rpl22) of Welwitschia mirabilis (Tree tumbo).